Consider the following 609-residue polypeptide: UvrABC system protein C (609 aa).

The GIY-YIG domain occupies 16–94 (SSAGVYRMYD…IKQYMPKYNV (79 aa)). The region spanning 203-238 (QQVISTLVAKMEQAAQQQEYEQAARFRDQIMALRKV) is the UVR domain.

It belongs to the UvrC family. As to quaternary structure, interacts with UvrB in an incision complex.

Its subcellular location is the cytoplasm. Functionally, the UvrABC repair system catalyzes the recognition and processing of DNA lesions. UvrC both incises the 5' and 3' sides of the lesion. The N-terminal half is responsible for the 3' incision and the C-terminal half is responsible for the 5' incision. The chain is UvrABC system protein C from Shewanella putrefaciens (strain CN-32 / ATCC BAA-453).